Here is a 292-residue protein sequence, read N- to C-terminus: Inositol oxygenase (292 aa).

Substrate-binding positions include arginine 33 and 88–90; that span reads DES. Fe cation contacts are provided by histidine 101, histidine 128, and aspartate 129. Substrate contacts are provided by residues lysine 132 and 149–150; that span reads GD. Fe cation contacts are provided by histidine 201, histidine 227, and aspartate 260. 227–228 provides a ligand contact to substrate; it reads HS.

This sequence belongs to the myo-inositol oxygenase family. The cofactor is Fe cation.

The protein resides in the cytoplasm. It catalyses the reaction myo-inositol + O2 = D-glucuronate + H2O + H(+). It participates in polyol metabolism; myo-inositol degradation into D-glucuronate; D-glucuronate from myo-inositol: step 1/1. In Dictyostelium discoideum (Social amoeba), this protein is Inositol oxygenase (miox).